The primary structure comprises 456 residues: Bifunctional protein GlmU (456 aa).

Residues 1–229 (MLNNAMSVVI…LSEVEGVNNR (229 aa)) are pyrophosphorylase. UDP-N-acetyl-alpha-D-glucosamine-binding positions include 11-14 (LAAG), K25, Q76, 81-82 (GT), 103-105 (YGD), G140, E154, N169, and N227. Position 105 (D105) interacts with Mg(2+). Mg(2+) is bound at residue N227. The segment at 230–250 (LQLSRLERVYQSEQAEKLLLA) is linker. An N-acetyltransferase region spans residues 251–456 (GVMLRDPARF…EGWRRPVKKK (206 aa)). R333 and K351 together coordinate UDP-N-acetyl-alpha-D-glucosamine. H363 functions as the Proton acceptor in the catalytic mechanism. The UDP-N-acetyl-alpha-D-glucosamine site is built by Y366 and N377. Acetyl-CoA is bound by residues A380, 386–387 (NY), S405, A423, and R440.

It in the N-terminal section; belongs to the N-acetylglucosamine-1-phosphate uridyltransferase family. The protein in the C-terminal section; belongs to the transferase hexapeptide repeat family. In terms of assembly, homotrimer. Requires Mg(2+) as cofactor.

The protein resides in the cytoplasm. The enzyme catalyses alpha-D-glucosamine 1-phosphate + acetyl-CoA = N-acetyl-alpha-D-glucosamine 1-phosphate + CoA + H(+). The catalysed reaction is N-acetyl-alpha-D-glucosamine 1-phosphate + UTP + H(+) = UDP-N-acetyl-alpha-D-glucosamine + diphosphate. It functions in the pathway nucleotide-sugar biosynthesis; UDP-N-acetyl-alpha-D-glucosamine biosynthesis; N-acetyl-alpha-D-glucosamine 1-phosphate from alpha-D-glucosamine 6-phosphate (route II): step 2/2. It participates in nucleotide-sugar biosynthesis; UDP-N-acetyl-alpha-D-glucosamine biosynthesis; UDP-N-acetyl-alpha-D-glucosamine from N-acetyl-alpha-D-glucosamine 1-phosphate: step 1/1. The protein operates within bacterial outer membrane biogenesis; LPS lipid A biosynthesis. Its function is as follows. Catalyzes the last two sequential reactions in the de novo biosynthetic pathway for UDP-N-acetylglucosamine (UDP-GlcNAc). The C-terminal domain catalyzes the transfer of acetyl group from acetyl coenzyme A to glucosamine-1-phosphate (GlcN-1-P) to produce N-acetylglucosamine-1-phosphate (GlcNAc-1-P), which is converted into UDP-GlcNAc by the transfer of uridine 5-monophosphate (from uridine 5-triphosphate), a reaction catalyzed by the N-terminal domain. In Shigella sonnei (strain Ss046), this protein is Bifunctional protein GlmU.